The following is a 471-amino-acid chain: Chitobiosyldiphosphodolichol beta-mannosyltransferase (471 aa).

Residues 1-31 (MDTSSVTMHTERACCHQAQRAVAAMLDKAPS) lie on the Lumenal side of the membrane. The chain crosses the membrane as a helical span at residues 32 to 52 (WLIWTAVLYVGLPFMLYWAVP). The Cytoplasmic portion of the chain corresponds to 53–126 (YLFYHNKTKS…ALPGASNAGK (74 aa)). The segment at residues 127–147 (SLGQTARKVVLQTCHIVRQLW) is an intramembrane region (helical). At 148 to 471 (ELRGCDYILI…MSELQVVRQS (324 aa)) the chain is on the cytoplasmic side.

It belongs to the glycosyltransferase group 1 family.

The protein localises to the endoplasmic reticulum membrane. The enzyme catalyses an N,N'-diacetylchitobiosyl-diphospho-di-trans,poly-cis-dolichol + GDP-alpha-D-mannose = a beta-D-Man-(1-&gt;4)-beta-D-GlcNAc-(1-&gt;4)-alpha-D-GlcNAc-diphospho-di-trans,poly-cis-dolichol + GDP + H(+). It functions in the pathway protein modification; protein glycosylation. Functionally, participates in the formation of the lipid-linked precursor oligosaccharide for N-glycosylation. Involved in assembling the dolichol-pyrophosphate-GlcNAc(2)-Man(5) intermediate on the cytoplasmic surface of the ER. In Eremothecium gossypii (strain ATCC 10895 / CBS 109.51 / FGSC 9923 / NRRL Y-1056) (Yeast), this protein is Chitobiosyldiphosphodolichol beta-mannosyltransferase (ALG1).